The following is a 198-amino-acid chain: Phage-like element PBSX protein XkdA (198 aa).

To B.subtilis YqaB.

The chain is Phage-like element PBSX protein XkdA (xkdA) from Bacillus subtilis (strain 168).